Consider the following 100-residue polypeptide: Small ribosomal subunit protein uS14 (100 aa).

It belongs to the universal ribosomal protein uS14 family. Part of the 30S ribosomal subunit. Contacts proteins S3 and S10.

In terms of biological role, binds 16S rRNA, required for the assembly of 30S particles and may also be responsible for determining the conformation of the 16S rRNA at the A site. The protein is Small ribosomal subunit protein uS14 of Prochlorococcus marinus (strain MIT 9211).